Reading from the N-terminus, the 344-residue chain is uncharacterized protein (344 aa).

Positions 221 to 249 (IQAQSMDEQKQIQEIYQNVEKLKEDVTKN) form a coiled coil.

Belongs to the IIV-6 287R family.

This is an uncharacterized protein from Aedes vexans (Inland floodwater mosquito).